The sequence spans 272 residues: ATP synthase subunit a (272 aa).

A run of 7 helical transmembrane segments spans residues 39–59 (GFWA…LIFI), 103–123 (VAPL…LKWI), 124–144 (PVDY…KIVP), 152–172 (FGIS…VKGV), 181–201 (FTPF…IIGL), 221–241 (VVFI…NVPW), and 242–262 (AIFH…LTVV).

This sequence belongs to the ATPase A chain family. In terms of assembly, F-type ATPases have 2 components, CF(1) - the catalytic core - and CF(0) - the membrane proton channel. CF(1) has five subunits: alpha(3), beta(3), gamma(1), delta(1), epsilon(1). CF(0) has three main subunits: a(1), b(2) and c(9-12). The alpha and beta chains form an alternating ring which encloses part of the gamma chain. CF(1) is attached to CF(0) by a central stalk formed by the gamma and epsilon chains, while a peripheral stalk is formed by the delta and b chains.

Its subcellular location is the cell inner membrane. Functionally, key component of the proton channel; it plays a direct role in the translocation of protons across the membrane. This Ectopseudomonas mendocina (strain ymp) (Pseudomonas mendocina) protein is ATP synthase subunit a.